The chain runs to 287 residues: Glucose uptake protein GlcU (287 aa).

A run of 8 helical transmembrane segments spans residues L4–G26, A38–V60, W110–L132, I153–V175, A180–Y197, I210–Q227, V232–L254, and R261–A283.

Belongs to the GRP transporter (TC 2.A.7.5) family.

Its subcellular location is the cell membrane. Involved in the uptake of glucose. In Bacillus subtilis (strain 168), this protein is Glucose uptake protein GlcU (glcU).